Reading from the N-terminus, the 25-residue chain is Caerin 1.1 (25 aa).

Position 25 is a leucine amide (leucine 25).

Expressed by the skin dorsal glands.

The protein localises to the secreted. In terms of biological role, antibacterial peptide with wide spectrum of activity. Active against the Gram-positive bacteria B.cereus (MIC=50 ug/ml), E.faecalis (MIC=25 ug/ml), L.lactis (MIC=1.5 ug/ml), L.innocua (MIC=25 ug/ml), S.aureus (MIC=3 ug/ml), S.epidermidis (MIC=12 ug/ml) and S.uberis (MIC=12 ug/ml), and against the Gram-negative bacteria E.coli (MIC=100 ug/ml) and P.multocida (MIC=25 ug/ml). This is Caerin 1.1 from Litoria peronii (Emerald spotted tree frog).